We begin with the raw amino-acid sequence, 319 residues long: Tetrahydromethanopterin S-methyltransferase subunit H (319 aa).

It belongs to the MtrH family. The complex is composed of 8 subunits; MtrA, MtrB, MtrC, MtrD, MtrE, MtrF, MtrG and MtrH.

It catalyses the reaction 5-methyl-5,6,7,8-tetrahydromethanopterin + coenzyme M + 2 Na(+)(in) = 5,6,7,8-tetrahydromethanopterin + methyl-coenzyme M + 2 Na(+)(out). It functions in the pathway one-carbon metabolism; methanogenesis from CO(2); methyl-coenzyme M from 5,10-methylene-5,6,7,8-tetrahydromethanopterin: step 2/2. Part of a complex that catalyzes the formation of methyl-coenzyme M and tetrahydromethanopterin from coenzyme M and methyl-tetrahydromethanopterin. This is an energy-conserving, sodium-ion translocating step. MtrH catalyzes the transfer of the methyl group from methyl-tetrahydromethanopterin to the corrinoid prosthetic group of MtrA. The polypeptide is Tetrahydromethanopterin S-methyltransferase subunit H (Methanococcus vannielii (strain ATCC 35089 / DSM 1224 / JCM 13029 / OCM 148 / SB)).